The primary structure comprises 788 residues: Leucine-rich repeat and fibronectin type-III domain-containing protein 2 (788 aa).

The first 20 residues, 1 to 20, serve as a signal peptide directing secretion; it reads METLLGGLLAFGMAFAVVDA. Positions 21-52 constitute an LRRNT domain; sequence CPKYCVCQNLSESLGTLCPSKGLLFVPPDIDR. The Extracellular portion of the chain corresponds to 21–534; sequence CPKYCVCQNL…MHSQILGGTM (514 aa). Residues N29 and N74 are each glycosylated (N-linked (GlcNAc...) asparagine). LRR repeat units follow at residues 53 to 74, 77 to 98, 101 to 122, 125 to 146, 150 to 171, 174 to 195, and 198 to 219; these read RTVE…DFAN, GLVD…SFLD, SLRS…TLRG, NLQH…AFED, TLED…SVRR, NLHQ…TFAD, and KLAR…PIFA. The 47-residue stretch at 242–288 folds into the LRRCT domain; it reads NPLHCNCELLWLRRLERDDDLKTCGSPGGLKGRYFWHIREEEFVCEP. One can recognise an Ig-like domain in the interval 289–375; sequence PLITQHTHKL…GEATATVEVS (87 aa). An intrachain disulfide couples C310 to C359. N332, N341, N384, and N457 each carry an N-linked (GlcNAc...) asparagine glycan. Positions 383 to 423 are disordered; sequence SNSTSRMAPPKSRLSDITGSSKTSRGGGGSGAGEPPKSTPE. The Fibronectin type-III domain maps to 422–518; that stretch reads PERAVLVSDV…GCAQFFTKAD (97 aa). The chain crosses the membrane as a helical span at residues 535–555; it reads ILVIGGIIVATLLVFIVILMV. Residues 556-788 lie on the Cytoplasmic side of the membrane; that stretch reads RYKVCNHDAP…SSEWVMESTV (233 aa). Residues 620–641 are compositionally biased toward low complexity; the sequence is CDSSSSSSLGSGEAAGLSRGPW. 2 disordered regions span residues 620–655 and 668–707; these read CDSS…PSLD and SQRK…ATRA. Residues 642–651 show a composition bias toward pro residues; that stretch reads RLPPPAPRPK. The PDZ-binding motif lies at 785-788; it reads ESTV.

The protein belongs to the LRFN family. In terms of assembly, forms heteromeric complexes with LRFN1, LRFN3 and LRFN4. Can form homomeric complexes, but not across cell junctions. Can form heteromeric complexes with LRFN5. Interacts with DLG1, DLG3 and DLG4; interaction with DLG4 is mediated by the PDZ-binding domain. Also interacts with DLG2. Interacts with 2 NMDA receptor subunits GRIN1 and GRIN2A.

It is found in the membrane. Its subcellular location is the synapse. The protein localises to the postsynaptic cell membrane. In terms of biological role, promotes neurite outgrowth in hippocampal neurons. Enhances the cell surface expression of GRIN1 and GRIN2A NMDA receptor subunits. May play a role in redistributing DLG4 to the cell periphery. This Rattus norvegicus (Rat) protein is Leucine-rich repeat and fibronectin type-III domain-containing protein 2 (Lrfn2).